The sequence spans 588 residues: DNA ligase (588 aa).

Glutamate 250 provides a ligand contact to ATP. Lysine 252 (N6-AMP-lysine intermediate) is an active-site residue. ATP is bound by residues arginine 257, arginine 272, glutamate 302, phenylalanine 342, arginine 417, and lysine 423.

Belongs to the ATP-dependent DNA ligase family. Mg(2+) serves as cofactor.

The enzyme catalyses ATP + (deoxyribonucleotide)n-3'-hydroxyl + 5'-phospho-(deoxyribonucleotide)m = (deoxyribonucleotide)n+m + AMP + diphosphate.. In terms of biological role, DNA ligase that seals nicks in double-stranded DNA during DNA replication, DNA recombination and DNA repair. This chain is DNA ligase, found in Nitrosopumilus maritimus (strain SCM1).